The sequence spans 410 residues: Chorismate synthase (410 aa).

NADP(+) is bound by residues arginine 43 and arginine 49. FMN-binding positions include arginine 143 to serine 145, glutamine 264 to alanine 265, glycine 308, lysine 323 to threonine 327, and arginine 349.

The protein belongs to the chorismate synthase family. As to quaternary structure, homotetramer. FMNH2 is required as a cofactor.

It carries out the reaction 5-O-(1-carboxyvinyl)-3-phosphoshikimate = chorismate + phosphate. It participates in metabolic intermediate biosynthesis; chorismate biosynthesis; chorismate from D-erythrose 4-phosphate and phosphoenolpyruvate: step 7/7. Catalyzes the anti-1,4-elimination of the C-3 phosphate and the C-6 proR hydrogen from 5-enolpyruvylshikimate-3-phosphate (EPSP) to yield chorismate, which is the branch point compound that serves as the starting substrate for the three terminal pathways of aromatic amino acid biosynthesis. This reaction introduces a second double bond into the aromatic ring system. In Corynebacterium glutamicum (strain ATCC 13032 / DSM 20300 / JCM 1318 / BCRC 11384 / CCUG 27702 / LMG 3730 / NBRC 12168 / NCIMB 10025 / NRRL B-2784 / 534), this protein is Chorismate synthase.